The sequence spans 358 residues: Uptake hydrogenase small subunit (358 aa).

The segment at residues 1–45 is a signal peptide (tat-type signal); the sequence is MSRLETFYDVMRRQGITRRSFLKYCSLTAAALGLGPAFAPRIAHA. Residues C62, C65, C160, C194, H232, C235, C260, and C266 each coordinate [4Fe-4S] cluster. [3Fe-4S] cluster contacts are provided by C275, C294, and C297.

This sequence belongs to the [NiFe]/[NiFeSe] hydrogenase small subunit family. In terms of assembly, heterodimer of a large and a small subunit. The cofactor is [4Fe-4S] cluster. It depends on [3Fe-4S] cluster as a cofactor. Post-translationally, predicted to be exported by the Tat system. The position of the signal peptide cleavage has been experimentally proven.

Its subcellular location is the cell membrane. The enzyme catalyses H2 + A = AH2. In terms of biological role, this enzyme recycles the H(2) produced by nitrogenase to increase the production of ATP and to protect nitrogenase against inhibition or damage by O(2) under carbon- or phosphate-limited conditions. The sequence is that of Uptake hydrogenase small subunit (hoxK) from Azotobacter vinelandii.